Reading from the N-terminus, the 261-residue chain is RING finger protein 208 (261 aa).

The disordered stretch occupies residues proline 83–glycine 106. Serine 102 is subject to Phosphoserine. The RING-type zinc-finger motif lies at cysteine 143–arginine 190.

This chain is RING finger protein 208 (RNF208), found in Homo sapiens (Human).